Reading from the N-terminus, the 356-residue chain is DNA polymerase IV (356 aa).

The 182-residue stretch at 6 to 187 (IIHIDMDYFF…LDIGDFPGVG (182 aa)) folds into the UmuC domain. Mg(2+) is bound by residues D10 and D105. Residue E106 is part of the active site.

The protein belongs to the DNA polymerase type-Y family. In terms of assembly, monomer. Mg(2+) is required as a cofactor.

It localises to the cytoplasm. It carries out the reaction DNA(n) + a 2'-deoxyribonucleoside 5'-triphosphate = DNA(n+1) + diphosphate. Poorly processive, error-prone DNA polymerase involved in untargeted mutagenesis. Copies undamaged DNA at stalled replication forks, which arise in vivo from mismatched or misaligned primer ends. These misaligned primers can be extended by PolIV. Exhibits no 3'-5' exonuclease (proofreading) activity. May be involved in translesional synthesis, in conjunction with the beta clamp from PolIII. The sequence is that of DNA polymerase IV from Staphylococcus epidermidis (strain ATCC 12228 / FDA PCI 1200).